The sequence spans 274 residues: NAD(P)H-quinone oxidoreductase subunit K, chloroplastic (274 aa).

2 stretches are compositionally biased toward polar residues: residues 1-10 (MVINQKNLSS) and 18-27 (SGSQSSTKAD). The disordered stretch occupies residues 1-27 (MVINQKNLSSPVAPYDKSGSQSSTKAD). Residues cysteine 90, cysteine 91, cysteine 155, and cysteine 186 each coordinate [4Fe-4S] cluster.

Belongs to the complex I 20 kDa subunit family. In terms of assembly, NDH is composed of at least 16 different subunits, 5 of which are encoded in the nucleus. It depends on [4Fe-4S] cluster as a cofactor.

The protein localises to the plastid. The protein resides in the chloroplast thylakoid membrane. The enzyme catalyses a plastoquinone + NADH + (n+1) H(+)(in) = a plastoquinol + NAD(+) + n H(+)(out). It carries out the reaction a plastoquinone + NADPH + (n+1) H(+)(in) = a plastoquinol + NADP(+) + n H(+)(out). Its function is as follows. NDH shuttles electrons from NAD(P)H:plastoquinone, via FMN and iron-sulfur (Fe-S) centers, to quinones in the photosynthetic chain and possibly in a chloroplast respiratory chain. The immediate electron acceptor for the enzyme in this species is believed to be plastoquinone. Couples the redox reaction to proton translocation, and thus conserves the redox energy in a proton gradient. This Chlorokybus atmophyticus (Soil alga) protein is NAD(P)H-quinone oxidoreductase subunit K, chloroplastic.